Consider the following 204-residue polypeptide: Uridylate kinase (204 aa).

26-31 contributes to the ATP binding site; that stretch reads GAGKGT. The interval 46–76 is NMP; that stretch reads SAGDLLRAEQGRAGSQYGELIKNCIKEGQIV. Residues arginine 52, 74–76, 104–107, and glutamine 111 each bind a ribonucleoside 5'-phosphate; these read QIV and GFPR. The interval 141–151 is LID; that stretch reads ERGKTSGRSDD. Arginine 142 is a binding site for ATP. Arginine 148 and arginine 159 together coordinate a ribonucleoside 5'-phosphate. Arginine 187 serves as a coordination point for ATP.

Belongs to the adenylate kinase family. UMP-CMP kinase subfamily. As to quaternary structure, monomer. It depends on Mg(2+) as a cofactor.

It is found in the cytoplasm. The protein resides in the nucleus. The catalysed reaction is UMP + ATP = UDP + ADP. Catalyzes the phosphorylation of pyrimidine nucleoside monophosphates at the expense of ATP. Plays an important role in de novo pyrimidine nucleotide biosynthesis. Has preference for UMP and dUMP as phosphate acceptors, but can also use CMP, dCMP, AMP, GMP, dGMP and dTMP. ATP and dATP are the best phosphate donors, but can also use GTP, dGTP, dCTP, and dTTP to some degree. This chain is Uridylate kinase, found in Saccharomyces cerevisiae (strain ATCC 204508 / S288c) (Baker's yeast).